The following is a 347-amino-acid chain: DNA-directed RNA polymerase subunit alpha (347 aa).

Residues 1–243 form an alpha N-terminal domain (alpha-NTD) region; that stretch reads MLIKQGERLI…DQISVFINFD (243 aa). The alpha C-terminal domain (alpha-CTD) stretch occupies residues 260–347; the sequence is VNEHLFKSID…EWKRKQQNEA (88 aa).

Belongs to the RNA polymerase alpha chain family. As to quaternary structure, homodimer. The RNAP catalytic core consists of 2 alpha, 1 beta, 1 beta' and 1 omega subunit. When a sigma factor is associated with the core the holoenzyme is formed, which can initiate transcription.

It carries out the reaction RNA(n) + a ribonucleoside 5'-triphosphate = RNA(n+1) + diphosphate. Functionally, DNA-dependent RNA polymerase catalyzes the transcription of DNA into RNA using the four ribonucleoside triphosphates as substrates. The polypeptide is DNA-directed RNA polymerase subunit alpha (Desulfovibrio desulfuricans (strain ATCC 27774 / DSM 6949 / MB)).